The sequence spans 332 residues: UDP-3-O-acylglucosamine N-acyltransferase (332 aa).

The Proton acceptor role is filled by H231.

The protein belongs to the transferase hexapeptide repeat family. LpxD subfamily. In terms of assembly, homotrimer.

The enzyme catalyses a UDP-3-O-[(3R)-3-hydroxyacyl]-alpha-D-glucosamine + a (3R)-hydroxyacyl-[ACP] = a UDP-2-N,3-O-bis[(3R)-3-hydroxyacyl]-alpha-D-glucosamine + holo-[ACP] + H(+). It functions in the pathway bacterial outer membrane biogenesis; LPS lipid A biosynthesis. Its function is as follows. Catalyzes the N-acylation of UDP-3-O-acylglucosamine using 3-hydroxyacyl-ACP as the acyl donor. Is involved in the biosynthesis of lipid A, a phosphorylated glycolipid that anchors the lipopolysaccharide to the outer membrane of the cell. This is UDP-3-O-acylglucosamine N-acyltransferase from Vesicomyosocius okutanii subsp. Calyptogena okutanii (strain HA).